The chain runs to 69 residues: Putative membrane protein insertion efficiency factor (69 aa).

It belongs to the UPF0161 family.

The protein localises to the cell inner membrane. Its function is as follows. Could be involved in insertion of integral membrane proteins into the membrane. This is Putative membrane protein insertion efficiency factor from Nitrosomonas europaea (strain ATCC 19718 / CIP 103999 / KCTC 2705 / NBRC 14298).